The sequence spans 217 residues: Probable transaldolase (217 aa).

Residue lysine 83 is the Schiff-base intermediate with substrate of the active site.

This sequence belongs to the transaldolase family. Type 3B subfamily.

The protein resides in the cytoplasm. The enzyme catalyses D-sedoheptulose 7-phosphate + D-glyceraldehyde 3-phosphate = D-erythrose 4-phosphate + beta-D-fructose 6-phosphate. It participates in carbohydrate degradation; pentose phosphate pathway; D-glyceraldehyde 3-phosphate and beta-D-fructose 6-phosphate from D-ribose 5-phosphate and D-xylulose 5-phosphate (non-oxidative stage): step 2/3. Transaldolase is important for the balance of metabolites in the pentose-phosphate pathway. The sequence is that of Probable transaldolase (tal) from Aquifex aeolicus (strain VF5).